We begin with the raw amino-acid sequence, 122 residues long: Large ribosomal subunit protein uL22c (122 aa).

It belongs to the universal ribosomal protein uL22 family. In terms of assembly, part of the 50S ribosomal subunit.

The protein localises to the plastid. It localises to the chloroplast. In terms of biological role, this protein binds specifically to 23S rRNA. Functionally, the globular domain of the protein is located near the polypeptide exit tunnel on the outside of the subunit, while an extended beta-hairpin is found that lines the wall of the exit tunnel in the center of the 70S ribosome. This Adiantum capillus-veneris (Maidenhair fern) protein is Large ribosomal subunit protein uL22c (rpl22).